Consider the following 922-residue polypeptide: Phosphoenolpyruvate carboxylase (922 aa).

The interval 1-20 (MTKTLHARPSAATDTTFAPP) is disordered. Residues histidine 142 and lysine 581 contribute to the active site.

This sequence belongs to the PEPCase type 1 family. Mg(2+) serves as cofactor.

It catalyses the reaction oxaloacetate + phosphate = phosphoenolpyruvate + hydrogencarbonate. Forms oxaloacetate, a four-carbon dicarboxylic acid source for the tricarboxylic acid cycle. The sequence is that of Phosphoenolpyruvate carboxylase (ppc) from Methylorubrum extorquens (strain ATCC 14718 / DSM 1338 / JCM 2805 / NCIMB 9133 / AM1) (Methylobacterium extorquens).